Reading from the N-terminus, the 462-residue chain is ATP synthase subunit beta (462 aa).

An ATP-binding site is contributed by 151–158; that stretch reads GGAGVGKT.

It belongs to the ATPase alpha/beta chains family. In terms of assembly, F-type ATPases have 2 components, CF(1) - the catalytic core - and CF(0) - the membrane proton channel. CF(1) has five subunits: alpha(3), beta(3), gamma(1), delta(1), epsilon(1). CF(0) has four main subunits: a(1), b(1), b'(1) and c(9-12).

It is found in the cell inner membrane. It carries out the reaction ATP + H2O + 4 H(+)(in) = ADP + phosphate + 5 H(+)(out). In terms of biological role, produces ATP from ADP in the presence of a proton gradient across the membrane. The catalytic sites are hosted primarily by the beta subunits. This is ATP synthase subunit beta from Pelodictyon phaeoclathratiforme (strain DSM 5477 / BU-1).